Here is a 340-residue protein sequence, read N- to C-terminus: 3-hydroxybenzoate synthase (340 aa).

Residues Tyr-147, Arg-154, Tyr-207, and Arg-220 each coordinate substrate. The active-site Proton acceptor is the Glu-334.

It belongs to the FkbO/Hyg5 family. In terms of assembly, trimer.

The enzyme catalyses chorismate = 3-hydroxybenzoate + pyruvate. Its function is as follows. Involved in the biosynthesis of BC325, a rapamycin analog containing a 3-hydroxybenzoate starter unit. Catalyzes the hydrolysis of chorismate via an intramolecular mechanism to yield 3-hydroxybenzoate (3HBA). The polypeptide is 3-hydroxybenzoate synthase (Streptomyces hygroscopicus).